Reading from the N-terminus, the 3218-residue chain is Serine/threonine-protein kinase Smg1 (3218 aa).

The disordered stretch occupies residues 32–78 (LNNNGNHGDSSNEGGGGNGSGRGGATGSGNIAGLGGSESMWSPGGGK). Positions 33 to 43 (NNNGNHGDSSN) are enriched in low complexity. Residues 44-67 (EGGGGNGSGRGGATGSGNIAGLGG) are compositionally biased toward gly residues. Phosphoserine is present on S70. Residues 1289–1692 (DAAAAAREEG…IFPAVVGANR (404 aa)) form the FAT domain. The HEAT repeat unit spans residues 1643 to 1678 (APWKVIIPQLFSRLNHHEPYVRKSVCDLLCRLAKSR). Positions 1897–2232 (VESSVCVLPT…LGVGDLKYHK (336 aa)) constitute a PI3K/PI4K catalytic domain. The tract at residues 1903-1909 (VLPTKTK) is G-loop. Residues 2101 to 2109 (GLGDRHLDN) form a catalytic loop region. The segment at 2121–2145 (HIDYNVCFEKGRTLRIPEKVPFRLT) is activation loop. One can recognise an FATC domain in the interval 3186–3218 (QRSTVAEQVDYVIREACNPENLAVLYEGWTPWV).

It belongs to the PI3/PI4-kinase family. Component of a post-splicing multiprotein NMD complex. Mn(2+) is required as a cofactor.

The protein localises to the cytoplasm. The enzyme catalyses L-seryl-[protein] + ATP = O-phospho-L-seryl-[protein] + ADP + H(+). It carries out the reaction L-threonyl-[protein] + ATP = O-phospho-L-threonyl-[protein] + ADP + H(+). Its function is as follows. Serine/threonine protein kinase involved in mRNA surveillance. Recognizes the substrate consensus sequence [ST]-Q. Involved in nonsense-mediated decay (NMD) of mRNAs containing premature stop codons, probably by phosphorylating Upf1. The polypeptide is Serine/threonine-protein kinase Smg1 (nonC) (Drosophila melanogaster (Fruit fly)).